The primary structure comprises 329 residues: 7,8-didemethyl-8-hydroxy-5-deazariboflavin synthase (329 aa).

The 235-residue stretch at 1 to 235 folds into the Radical SAM core domain; sequence MFIPVTNICR…SDVSVQVAPN (235 aa). Positions 9, 13, and 16 each coordinate [4Fe-4S] cluster.

It belongs to the radical SAM superfamily. CofG family. As to quaternary structure, consists of two subunits, CofG and CofH. [4Fe-4S] cluster is required as a cofactor.

It catalyses the reaction 5-amino-5-(4-hydroxybenzyl)-6-(D-ribitylimino)-5,6-dihydrouracil + S-adenosyl-L-methionine = 7,8-didemethyl-8-hydroxy-5-deazariboflavin + 5'-deoxyadenosine + L-methionine + NH4(+) + H(+). The protein operates within cofactor biosynthesis; coenzyme F0 biosynthesis. Its function is as follows. Catalyzes the radical-mediated synthesis of 7,8-didemethyl-8-hydroxy-5-deazariboflavin from 5-amino-5-(4-hydroxybenzyl)-6-(D-ribitylimino)-5,6-dihydrouracil. The protein is 7,8-didemethyl-8-hydroxy-5-deazariboflavin synthase of Methanosarcina acetivorans (strain ATCC 35395 / DSM 2834 / JCM 12185 / C2A).